A 228-amino-acid chain; its full sequence is Odorant-binding protein 47 (228 aa).

6 cysteine pairs are disulfide-bonded: Cys-60-Cys-225, Cys-73-Cys-215, Cys-74-Cys-204, Cys-88-Cys-114, Cys-110-Cys-185, and Cys-158-Cys-195. Asn-117 carries an N-linked (GlcNAc...) asparagine glycan.

This sequence belongs to the PBP/GOBP family. In terms of processing, glycosylated. Head without antennae (at protein level).

The protein localises to the secreted. Present in the aqueous fluid surrounding olfactory sensory dendrites and are thought to aid in the capture and transport of hydrophobic odorants into and through this fluid. Binds N-phenyl-1-naphthylamine, menthol, citronellal, 1-dodecanol, decanal, p-tert-butylbenzophenone, 4-hydroxy-4'-isopropylazobenzene, 2-pyrrolyl-p-methyl-azobenzene and indole. Expressed in mosquito head but barely detectable in antennae, which suggests that it may be present in mouth structures, such as palpi and proboscis, and may have a function in taste. The polypeptide is Odorant-binding protein 47 (Anopheles gambiae (African malaria mosquito)).